The primary structure comprises 110 residues: Inner membrane protein H108R (110 aa).

Residues 10–32 (LIVIITILITTRELSTTMLIVSL) traverse the membrane as a helical segment.

The protein belongs to the asfivirus H108R family.

The protein resides in the virion membrane. The sequence is that of Inner membrane protein H108R from African swine fever virus (isolate Pig/Kenya/KEN-50/1950) (ASFV).